Here is a 178-residue protein sequence, read N- to C-terminus: Interleukin-10 (178 aa).

The signal sequence occupies residues 1-18 (MHSSALLCFLVFLAGVGA). N-linked (GlcNAc...) asparagine glycosylation is present at Asn-29. 2 cysteine pairs are disulfide-bonded: Cys-30/Cys-126 and Cys-80/Cys-132. Residue Asn-134 is glycosylated (N-linked (GlcNAc...) asparagine).

The protein belongs to the IL-10 family. As to quaternary structure, homodimer. Interacts with IL10RA and IL10RB.

It is found in the secreted. Functionally, major immune regulatory cytokine that acts on many cells of the immune system where it has profound anti-inflammatory functions, limiting excessive tissue disruption caused by inflammation. Mechanistically, IL10 binds to its heterotetrameric receptor comprising IL10RA and IL10RB leading to JAK1 and STAT2-mediated phosphorylation of STAT3. In turn, STAT3 translocates to the nucleus where it drives expression of anti-inflammatory mediators. Targets antigen-presenting cells (APCs) such as macrophages and monocytes and inhibits their release of pro-inflammatory cytokines including granulocyte-macrophage colony-stimulating factor /GM-CSF, granulocyte colony-stimulating factor/G-CSF, IL-1 alpha, IL-1 beta, IL-6, IL-8 and TNF-alpha. Also interferes with antigen presentation by reducing the expression of MHC-class II and co-stimulatory molecules, thereby inhibiting their ability to induce T cell activation. In addition, controls the inflammatory response of macrophages by reprogramming essential metabolic pathways including mTOR signaling. This is Interleukin-10 (IL10) from Felis catus (Cat).